The primary structure comprises 414 residues: Signal recognition particle receptor FtsY (414 aa).

Residues 216-223 (GVNGVGKT), 298-302 (DTAGR), and 362-365 (TKLD) contribute to the GTP site.

This sequence belongs to the GTP-binding SRP family. FtsY subfamily. Part of the signal recognition particle protein translocation system, which is composed of SRP and FtsY. SRP is a ribonucleoprotein composed of Ffh and a 4.5S RNA molecule.

It localises to the cell inner membrane. The protein resides in the cytoplasm. It catalyses the reaction GTP + H2O = GDP + phosphate + H(+). Involved in targeting and insertion of nascent membrane proteins into the cytoplasmic membrane. Acts as a receptor for the complex formed by the signal recognition particle (SRP) and the ribosome-nascent chain (RNC). Interaction with SRP-RNC leads to the transfer of the RNC complex to the Sec translocase for insertion into the membrane, the hydrolysis of GTP by both Ffh and FtsY, and the dissociation of the SRP-FtsY complex into the individual components. The sequence is that of Signal recognition particle receptor FtsY from Haemophilus influenzae (strain ATCC 51907 / DSM 11121 / KW20 / Rd).